A 339-amino-acid polypeptide reads, in one-letter code: Anthranilate phosphoribosyltransferase (339 aa).

Residues G80, 83-84, 90-93, 108-116, and S120 each bind 5-phospho-alpha-D-ribose 1-diphosphate; these read GD, NVST, and KHGNRSVTS. Residue G80 participates in anthranilate binding. S92 is a binding site for Mg(2+). N111 provides a ligand contact to anthranilate. R166 is a binding site for anthranilate. D225 and E226 together coordinate Mg(2+).

The protein belongs to the anthranilate phosphoribosyltransferase family. Homodimer. The cofactor is Mg(2+).

The catalysed reaction is N-(5-phospho-beta-D-ribosyl)anthranilate + diphosphate = 5-phospho-alpha-D-ribose 1-diphosphate + anthranilate. Its pathway is amino-acid biosynthesis; L-tryptophan biosynthesis; L-tryptophan from chorismate: step 2/5. Catalyzes the transfer of the phosphoribosyl group of 5-phosphorylribose-1-pyrophosphate (PRPP) to anthranilate to yield N-(5'-phosphoribosyl)-anthranilate (PRA). This Ignicoccus hospitalis (strain KIN4/I / DSM 18386 / JCM 14125) protein is Anthranilate phosphoribosyltransferase.